Here is a 293-residue protein sequence, read N- to C-terminus: 4-hydroxy-tetrahydrodipicolinate synthase (293 aa).

Threonine 47 contacts pyruvate. The active-site Proton donor/acceptor is the tyrosine 135. Lysine 164 acts as the Schiff-base intermediate with substrate in catalysis. Position 205 (isoleucine 205) interacts with pyruvate.

It belongs to the DapA family. In terms of assembly, homotetramer; dimer of dimers.

It localises to the cytoplasm. The enzyme catalyses L-aspartate 4-semialdehyde + pyruvate = (2S,4S)-4-hydroxy-2,3,4,5-tetrahydrodipicolinate + H2O + H(+). It participates in amino-acid biosynthesis; L-lysine biosynthesis via DAP pathway; (S)-tetrahydrodipicolinate from L-aspartate: step 3/4. Its function is as follows. Catalyzes the condensation of (S)-aspartate-beta-semialdehyde [(S)-ASA] and pyruvate to 4-hydroxy-tetrahydrodipicolinate (HTPA). This Symbiobacterium thermophilum (strain DSM 24528 / JCM 14929 / IAM 14863 / T) protein is 4-hydroxy-tetrahydrodipicolinate synthase.